The sequence spans 202 residues: Proteasome subunit beta 1 (202 aa).

A propeptide (removed in mature form; by autocatalysis) is located at residue Met1. Residue Thr2 is the Nucleophile of the active site.

The protein belongs to the peptidase T1B family. As to quaternary structure, the 20S proteasome core is composed of 14 alpha and 14 beta subunits that assemble into four stacked heptameric rings, resulting in a barrel-shaped structure. The two inner rings, each composed of seven catalytic beta subunits, are sandwiched by two outer rings, each composed of seven alpha subunits. The catalytic chamber with the active sites is on the inside of the barrel. Has a gated structure, the ends of the cylinder being occluded by the N-termini of the alpha-subunits. Is capped at one or both ends by the proteasome regulatory ATPase, PAN.

The protein resides in the cytoplasm. It carries out the reaction Cleavage of peptide bonds with very broad specificity.. With respect to regulation, the formation of the proteasomal ATPase PAN-20S proteasome complex, via the docking of the C-termini of PAN into the intersubunit pockets in the alpha-rings, triggers opening of the gate for substrate entry. Interconversion between the open-gate and close-gate conformations leads to a dynamic regulation of the 20S proteasome proteolysis activity. In terms of biological role, component of the proteasome core, a large protease complex with broad specificity involved in protein degradation. The protein is Proteasome subunit beta 1 of Pyrobaculum arsenaticum (strain DSM 13514 / JCM 11321 / PZ6).